The chain runs to 502 residues: ATP synthase subunit alpha (502 aa).

An ATP-binding site is contributed by 169–176 (GDRQTGKT).

It belongs to the ATPase alpha/beta chains family. In terms of assembly, F-type ATPases have 2 components, CF(1) - the catalytic core - and CF(0) - the membrane proton channel. CF(1) has five subunits: alpha(3), beta(3), gamma(1), delta(1), epsilon(1). CF(0) has three main subunits: a(1), b(2) and c(9-12). The alpha and beta chains form an alternating ring which encloses part of the gamma chain. CF(1) is attached to CF(0) by a central stalk formed by the gamma and epsilon chains, while a peripheral stalk is formed by the delta and b chains.

The protein localises to the cell inner membrane. The enzyme catalyses ATP + H2O + 4 H(+)(in) = ADP + phosphate + 5 H(+)(out). Its function is as follows. Produces ATP from ADP in the presence of a proton gradient across the membrane. The alpha chain is a regulatory subunit. This chain is ATP synthase subunit alpha, found in Desulfovibrio desulfuricans (strain ATCC 27774 / DSM 6949 / MB).